The sequence spans 148 residues: SsrA-binding protein (148 aa).

It belongs to the SmpB family.

Its subcellular location is the cytoplasm. Required for rescue of stalled ribosomes mediated by trans-translation. Binds to transfer-messenger RNA (tmRNA), required for stable association of tmRNA with ribosomes. tmRNA and SmpB together mimic tRNA shape, replacing the anticodon stem-loop with SmpB. tmRNA is encoded by the ssrA gene; the 2 termini fold to resemble tRNA(Ala) and it encodes a 'tag peptide', a short internal open reading frame. During trans-translation Ala-aminoacylated tmRNA acts like a tRNA, entering the A-site of stalled ribosomes, displacing the stalled mRNA. The ribosome then switches to translate the ORF on the tmRNA; the nascent peptide is terminated with the 'tag peptide' encoded by the tmRNA and targeted for degradation. The ribosome is freed to recommence translation, which seems to be the essential function of trans-translation. This Burkholderia ambifaria (strain ATCC BAA-244 / DSM 16087 / CCUG 44356 / LMG 19182 / AMMD) (Burkholderia cepacia (strain AMMD)) protein is SsrA-binding protein.